Here is a 129-residue protein sequence, read N- to C-terminus: DNA-directed RNA polymerase II subunit RPB9 (129 aa).

Zn(2+) contacts are provided by Cys-21, Cys-24, Cys-43, Cys-46, Cys-90, Cys-93, Cys-118, and Cys-123. Residues 21–46 (CQECNNMLYPKEDKENKILLYACRNC) form a C4-type zinc finger. Residues 86–128 (EDHACPKCSHREAVFFQAQTRRAEEEMRLYYVCTNQNCTHRWT) form a TFIIS-type zinc finger.

This sequence belongs to the archaeal RpoM/eukaryotic RPA12/RPB9/RPC11 RNA polymerase family. As to quaternary structure, component of the RNA polymerase II (Pol II) complex consisting of 12 subunits.

It localises to the nucleus. The protein resides in the nucleolus. Functionally, DNA-dependent RNA polymerase catalyzes the transcription of DNA into RNA using the four ribonucleoside triphosphates as substrates. Component of RNA polymerase II which synthesizes mRNA precursors and many functional non-coding RNAs. Pol II is the central component of the basal RNA polymerase II transcription machinery. It is composed of mobile elements that move relative to each other. RPB9 is part of the upper jaw surrounding the central large cleft and thought to grab the incoming DNA template. In Drosophila melanogaster (Fruit fly), this protein is DNA-directed RNA polymerase II subunit RPB9.